Consider the following 347-residue polypeptide: 4-hydroxy-2-oxovalerate aldolase 1 (347 aa).

The Pyruvate carboxyltransferase domain occupies 8-261 (VTLYDMSLLX…ETGIDLYKIM (254 aa)). Residue histidine 20 is the Proton acceptor of the active site. Substrate-binding residues include serine 171 and histidine 200. Residues histidine 200 and histidine 202 each contribute to the Mn(2+) site. Tyrosine 291 contributes to the substrate binding site.

It belongs to the 4-hydroxy-2-oxovalerate aldolase family.

It catalyses the reaction (S)-4-hydroxy-2-oxopentanoate = acetaldehyde + pyruvate. The sequence is that of 4-hydroxy-2-oxovalerate aldolase 1 (salH) from Metapseudomonas furukawaii (Pseudomonas furukawaii).